The sequence spans 455 residues: Ribulose bisphosphate carboxylase large chain (455 aa).

Lys5 carries the post-translational modification N6,N6,N6-trimethyllysine. Residues Asn114 and Thr164 each contribute to the substrate site. The active-site Proton acceptor is Lys166. Substrate is bound at residue Lys168. Mg(2+) contacts are provided by Lys192, Asp194, and Glu195. Lys192 carries the N6-carboxylysine modification. His285 functions as the Proton acceptor in the catalytic mechanism. Substrate contacts are provided by Arg286, His318, and Ser370.

The protein belongs to the RuBisCO large chain family. Type I subfamily. Heterohexadecamer of 8 large chains and 8 small chains; disulfide-linked. The disulfide link is formed within the large subunit homodimers. Requires Mg(2+) as cofactor. The disulfide bond which can form in the large chain dimeric partners within the hexadecamer appears to be associated with oxidative stress and protein turnover.

It is found in the plastid. Its subcellular location is the chloroplast. It catalyses the reaction 2 (2R)-3-phosphoglycerate + 2 H(+) = D-ribulose 1,5-bisphosphate + CO2 + H2O. The enzyme catalyses D-ribulose 1,5-bisphosphate + O2 = 2-phosphoglycolate + (2R)-3-phosphoglycerate + 2 H(+). Functionally, ruBisCO catalyzes two reactions: the carboxylation of D-ribulose 1,5-bisphosphate, the primary event in carbon dioxide fixation, as well as the oxidative fragmentation of the pentose substrate in the photorespiration process. Both reactions occur simultaneously and in competition at the same active site. The sequence is that of Ribulose bisphosphate carboxylase large chain from Lupinus microcarpus var. densiflorus (Whitewhorl lupine).